A 473-amino-acid chain; its full sequence is Ribonuclease Y (473 aa).

Residues 4–24 form a helical membrane-spanning segment; it reads LIAFIILLILFVLLITIVPVV. The region spanning 158–218 is the KH domain; that stretch reads SLFNIDIIDE…IRREIARIVM (61 aa). Residues 285-378 form the HD domain; the sequence is ILSHSLEVAE…VKIVDTLSAA (94 aa).

This sequence belongs to the RNase Y family.

Its subcellular location is the cell membrane. In terms of biological role, endoribonuclease that initiates mRNA decay. The polypeptide is Ribonuclease Y (Ureaplasma parvum serovar 3 (strain ATCC 27815 / 27 / NCTC 11736)).